The following is a 466-amino-acid chain: GTPase Der (466 aa).

EngA-type G domains follow at residues 3-166 (PVIA…PEIP) and 177-350 (IKIA…QSAT). GTP-binding positions include 9–16 (GRPNVGKS), 56–60 (DTGGI), 118–121 (NKID), 183–190 (GRPNVGKS), 230–234 (DTAGV), and 295–298 (NKWD). In terms of domain architecture, KH-like spans 351–435 (DRFSTNYLTR…PIRIEFRTTD (85 aa)). Residues 442–466 (KKSMTRQQFIQKRRKEERDRNNPRR) are disordered. The span at 455-466 (RKEERDRNNPRR) shows a compositional bias: basic and acidic residues.

Belongs to the TRAFAC class TrmE-Era-EngA-EngB-Septin-like GTPase superfamily. EngA (Der) GTPase family. In terms of assembly, associates with the 50S ribosomal subunit.

In terms of biological role, GTPase that plays an essential role in the late steps of ribosome biogenesis. The sequence is that of GTPase Der from Cellvibrio japonicus (strain Ueda107) (Pseudomonas fluorescens subsp. cellulosa).